We begin with the raw amino-acid sequence, 449 residues long: Signal recognition particle protein (449 aa).

Residues 109–116, 191–195, and 249–252 contribute to the GTP site; these read GLQGSGKT, DTAGR, and SRID.

The protein belongs to the GTP-binding SRP family. SRP54 subfamily. Part of the signal recognition particle protein translocation system, which is composed of SRP and FtsY. SRP is a ribonucleoprotein composed of Ffh and a 4.5S RNA molecule.

It is found in the cytoplasm. It carries out the reaction GTP + H2O = GDP + phosphate + H(+). Functionally, involved in targeting and insertion of nascent membrane proteins into the cytoplasmic membrane. Binds to the hydrophobic signal sequence of the ribosome-nascent chain (RNC) as it emerges from the ribosomes. The SRP-RNC complex is then targeted to the cytoplasmic membrane where it interacts with the SRP receptor FtsY. Interaction with FtsY leads to the transfer of the RNC complex to the Sec translocase for insertion into the membrane, the hydrolysis of GTP by both Ffh and FtsY, and the dissociation of the SRP-FtsY complex into the individual components. This is Signal recognition particle protein from Rickettsia bellii (strain RML369-C).